We begin with the raw amino-acid sequence, 250 residues long: 3-deoxy-manno-octulosonate cytidylyltransferase (250 aa).

This sequence belongs to the KdsB family.

The protein resides in the cytoplasm. The catalysed reaction is 3-deoxy-alpha-D-manno-oct-2-ulosonate + CTP = CMP-3-deoxy-beta-D-manno-octulosonate + diphosphate. Its pathway is nucleotide-sugar biosynthesis; CMP-3-deoxy-D-manno-octulosonate biosynthesis; CMP-3-deoxy-D-manno-octulosonate from 3-deoxy-D-manno-octulosonate and CTP: step 1/1. The protein operates within bacterial outer membrane biogenesis; lipopolysaccharide biosynthesis. In terms of biological role, activates KDO (a required 8-carbon sugar) for incorporation into bacterial lipopolysaccharide in Gram-negative bacteria. The chain is 3-deoxy-manno-octulosonate cytidylyltransferase from Rhodopirellula baltica (strain DSM 10527 / NCIMB 13988 / SH1).